The sequence spans 163 residues: Putative pre-16S rRNA nuclease (163 aa).

It belongs to the YqgF nuclease family.

The protein resides in the cytoplasm. In terms of biological role, could be a nuclease involved in processing of the 5'-end of pre-16S rRNA. This Roseobacter denitrificans (strain ATCC 33942 / OCh 114) (Erythrobacter sp. (strain OCh 114)) protein is Putative pre-16S rRNA nuclease.